We begin with the raw amino-acid sequence, 252 residues long: Flavin-dependent thymidylate synthase (252 aa).

Positions 7–235 (LDVQLVACST…PTVFSDFETS (229 aa)) constitute a ThyX domain. Residues 94-97 (ELVR), 105-109 (QLSQR), and Arg-174 each bind dUMP. FAD is bound by residues 97–99 (RHR) and Gln-105. The short motif at 97–107 (RHRHFSFSQLS) is the ThyX motif element. FAD is bound by residues 190-192 (NFR) and His-196. Arg-201 is a binding site for dUMP. Catalysis depends on Arg-201, which acts as the Involved in ionization of N3 of dUMP, leading to its activation.

The protein belongs to the thymidylate synthase ThyX family. In terms of assembly, homotetramer. FAD serves as cofactor.

It carries out the reaction dUMP + (6R)-5,10-methylene-5,6,7,8-tetrahydrofolate + NADPH + H(+) = dTMP + (6S)-5,6,7,8-tetrahydrofolate + NADP(+). It functions in the pathway pyrimidine metabolism; dTTP biosynthesis. Functionally, catalyzes the reductive methylation of 2'-deoxyuridine-5'-monophosphate (dUMP) to 2'-deoxythymidine-5'-monophosphate (dTMP) while utilizing 5,10-methylenetetrahydrofolate (mTHF) as the methyl donor, and NADPH and FADH(2) as the reductant. This Corynebacterium diphtheriae (strain ATCC 700971 / NCTC 13129 / Biotype gravis) protein is Flavin-dependent thymidylate synthase.